Consider the following 772-residue polypeptide: Angiomotin-like protein 2 (772 aa).

3 disordered regions span residues 41 to 158, 170 to 239, and 260 to 299; these read GGAG…HVRS, RNGA…SPHF, and QYQY…PSAQ. Basic and acidic residues-rich tracts occupy residues 80–91, 100–112, and 142–153; these read QGGETHLAENRL, KGEE…EAKA, and RRQDEALRELRH. Positions 101–303 are required for interaction with CDH5; the sequence is GEELPTYEEA…GPPSAQATLG (203 aa). Y107 carries the post-translational modification Phosphotyrosine; by FGFR1. A compositionally biased stretch (polar residues) spans 178–191; that stretch reads HMSSSHSFPQLARS. The segment covering 197-214 has biased composition (pro residues); that stretch reads PRGPPAEGPEPRGPPPQY. Residues 221 to 303 are required for interaction with CDH1; it reads QETAAVTDPR…GPPSAQATLG (83 aa). Residues 305 to 578 are a coiled coil; it reads AHLAQMETVL…KYLEERAMRQ (274 aa). Residues K343 and K404 each participate in a glycyl lysine isopeptide (Lys-Gly) (interchain with G-Cter in ubiquitin) cross-link. Disordered stretches follow at residues 596-615 and 680-752; these read IRHS…LLPG and GLVS…RTPS. Positions 686 to 699 are enriched in basic and acidic residues; the sequence is RQTDARPAGDRVPA. Residues 718–733 are compositionally biased toward polar residues; sequence DGSTQTDGPADNTSAC. S752 and S755 each carry phosphoserine. Positions 769–772 match the PDZ-binding motif; the sequence is EILI.

It belongs to the angiomotin family. In terms of assembly, part of a complex composed of AMOTL2, MAGI1 and CDH5, within the complex AMOTL2 acts as a scaffold protein for the interaction of MAGI1 with CDH5. The complex is required for coupling actin fibers to cell junctions in endothelial cells. Within the complex AMOTL2 (via its N-terminus) interacts with CDH5. Interacts (via N-terminus) with MAGI1. Interacts (via N-terminus) with ACTB; the interaction facilitates binding of cell junction complexes to actin fibers in endothelial cells. Interacts with CDH1; the interaction may facilitate binding of radial actin fibers to cell junction complexes. Interacts with SRC. Interacts with YAP1; the interaction is required for ubiquitination of AMOTL2 and localization of YAP1 to tight junctions. Interacts with WWP1; the interaction facilitates WWP1 interaction with the Crumbs complex and subsequent WWP1 translocation to the plasma membrane. WWP1 interaction with the Crumbs complex promotes WWP1 monoubiquitination of AMOTL2 which subsequently activates the Hippo signaling pathway. When ubiquitinated interacts with LATS2 (via UBA domain); the interaction promotes LATS2 phosphorylation of YAP1. Interacts (via PPXY motif) with WWTR1/TAZ (via WW domain); the interaction promotes WWTR1/TAZ localization to the cytoplasm and thereby inhibition of its transcriptional properties. Interacts with PHLDB2; interaction may facilitate PHLDB2 localization to the myotube podosome cortex that surrounds the core. Post-translationally, phosphorylation at Tyr-107 is necessary for efficient binding to SRC and synergistically functioning with SRC to activate the downstream MAPK pathway. Monoubiquitinated at Lys-343 and Lys-404 by Crumbs complex-bound WWP1. De-ubiquitinated at Lys-343 and Lys-404 by USP9X; the interaction may be promoted by cell contact inhibition. Deubiquitination of AMOTL2 negatively regulates Hippo signaling activation. Expressed in skeletal muscle at neuromuscular junctions (at protein level).

Its subcellular location is the recycling endosome. The protein resides in the cytoplasm. It localises to the cell projection. It is found in the podosome. The protein localises to the cell junction. Regulates the translocation of phosphorylated SRC to peripheral cell-matrix adhesion sites. Required for proper architecture of actin filaments. Plays a role in coupling actin fibers to cell junctions in endothelial cells and is therefore required for correct endothelial cell morphology via facilitating transcellular transmission of mechanical force resulting in endothelial cell elongation. Required for the anchoring of radial actin fibers to CDH1 junction complexes at the cell membrane which facilitates organization of radial actin fiber structure and cellular response to contractile forces. This contributes to maintenance of cell area, size, shape, epithelial sheet organization and trophectoderm cell properties that facilitate blastocyst zona hatching. Inhibits the Wnt/beta-catenin signaling pathway, probably by recruiting CTNNB1 to recycling endosomes and hence preventing its translocation to the nucleus. Participates in angiogenesis. Activates the Hippo signaling pathway in response to cell contact inhibition via interaction with and ubiquitination by Crumbs complex-bound WWP1. Ubiquitinated AMOTL2 then interacts with LATS2 which in turn phosphorylates YAP1, excluding it from the nucleus and localizing it to the cytoplasm and tight junctions, therefore ultimately repressing YAP1-driven transcription of target genes. Acts to inhibit WWTR1/TAZ transcriptional coactivator activity via sequestering WWTR1/TAZ in the cytoplasm and at tight junctions. Regulates the size and protein composition of the podosome cortex and core at myofibril neuromuscular junctions. Selectively promotes FGF-induced MAPK activation through SRC. May play a role in the polarity, proliferation and migration of endothelial cells. The polypeptide is Angiomotin-like protein 2 (Mus musculus (Mouse)).